The primary structure comprises 157 residues: Transcriptional repressor NrdR (157 aa).

A zinc finger lies at 3–34; sequence CPFCNAEDTKVIDSRLVEEGTQVRRRRECLKC. Residues 49 to 139 enclose the ATP-cone domain; that stretch reads PRIIKRDGRR…VYRSFQDINA (91 aa).

Belongs to the NrdR family. The cofactor is Zn(2+).

In terms of biological role, negatively regulates transcription of bacterial ribonucleotide reductase nrd genes and operons by binding to NrdR-boxes. This chain is Transcriptional repressor NrdR, found in Coxiella burnetii (strain CbuK_Q154) (Coxiella burnetii (strain Q154)).